Reading from the N-terminus, the 535-residue chain is uncharacterized protein (535 aa).

A run of 6 helical transmembrane segments spans residues 55-75 (LITIICHLFLLLNIFISIPII), 82-102 (FMPVGFTALAAILLAMQIMFV), 115-135 (IICFLLAIDVLVVFLSPILRH), 143-163 (AFVLWAFLMSLWIVITDLMLF), 201-221 (STILSVILTILTIHTLVTLIM), and 346-366 (VSGPYVLVAHGIGGVYSNVFA).

Its subcellular location is the membrane. This is an uncharacterized protein from Schizosaccharomyces pombe (strain 972 / ATCC 24843) (Fission yeast).